Consider the following 378-residue polypeptide: UPF0754 membrane protein BCE_0952 (378 aa).

2 helical membrane-spanning segments follow: residues 1–21 (MNIWLSMLTTTGLGAIIGGFT) and 357–377 (YLGALLGGMIGIVQGLLLLFL).

This sequence belongs to the UPF0754 family.

Its subcellular location is the cell membrane. The chain is UPF0754 membrane protein BCE_0952 from Bacillus cereus (strain ATCC 10987 / NRS 248).